A 423-amino-acid chain; its full sequence is UDP-N-acetylmuramoylalanine--D-glutamate ligase (423 aa).

An ATP-binding site is contributed by 112–118; it reads GSVGKST.

The protein belongs to the MurCDEF family.

Its subcellular location is the cytoplasm. The catalysed reaction is UDP-N-acetyl-alpha-D-muramoyl-L-alanine + D-glutamate + ATP = UDP-N-acetyl-alpha-D-muramoyl-L-alanyl-D-glutamate + ADP + phosphate + H(+). It participates in cell wall biogenesis; peptidoglycan biosynthesis. In terms of biological role, cell wall formation. Catalyzes the addition of glutamate to the nucleotide precursor UDP-N-acetylmuramoyl-L-alanine (UMA). In Thermosipho africanus (strain TCF52B), this protein is UDP-N-acetylmuramoylalanine--D-glutamate ligase.